Consider the following 265-residue polypeptide: Cytochrome c oxidase subunit 3 (265 aa).

6 consecutive transmembrane segments (helical) span residues glycine 41–tryptophan 61, glycine 85–phenylalanine 105, threonine 137–glycine 157, alanine 162–methionine 182, phenylalanine 200–isoleucine 220, and tryptophan 245–isoleucine 265.

The protein belongs to the cytochrome c oxidase subunit 3 family. As to quaternary structure, component of the cytochrome c oxidase (complex IV, CIV), a multisubunit enzyme composed of a catalytic core of 3 subunits and several supernumerary subunits. The complex exists as a monomer or a dimer and forms supercomplexes (SCs) in the inner mitochondrial membrane with ubiquinol-cytochrome c oxidoreductase (cytochrome b-c1 complex, complex III, CIII).

The protein localises to the mitochondrion inner membrane. The enzyme catalyses 4 Fe(II)-[cytochrome c] + O2 + 8 H(+)(in) = 4 Fe(III)-[cytochrome c] + 2 H2O + 4 H(+)(out). Its function is as follows. Component of the cytochrome c oxidase, the last enzyme in the mitochondrial electron transport chain which drives oxidative phosphorylation. The respiratory chain contains 3 multisubunit complexes succinate dehydrogenase (complex II, CII), ubiquinol-cytochrome c oxidoreductase (cytochrome b-c1 complex, complex III, CIII) and cytochrome c oxidase (complex IV, CIV), that cooperate to transfer electrons derived from NADH and succinate to molecular oxygen, creating an electrochemical gradient over the inner membrane that drives transmembrane transport and the ATP synthase. Cytochrome c oxidase is the component of the respiratory chain that catalyzes the reduction of oxygen to water. Electrons originating from reduced cytochrome c in the intermembrane space (IMS) are transferred via the dinuclear copper A center (CU(A)) of subunit 2 and heme A of subunit 1 to the active site in subunit 1, a binuclear center (BNC) formed by heme A3 and copper B (CU(B)). The BNC reduces molecular oxygen to 2 water molecules using 4 electrons from cytochrome c in the IMS and 4 protons from the mitochondrial matrix. This is Cytochrome c oxidase subunit 3 (COX3) from Arabidopsis thaliana (Mouse-ear cress).